The primary structure comprises 402 residues: Argininosuccinate synthase (402 aa).

Residues 11–19 and A39 each bind ATP; that span reads AYSGGLDTS. Y90 and S95 together coordinate L-citrulline. G120 serves as a coordination point for ATP. The L-aspartate site is built by T122, N126, and D127. N126 contributes to the L-citrulline binding site. Residues R130, S179, S188, E264, and Y276 each coordinate L-citrulline.

This sequence belongs to the argininosuccinate synthase family. Type 1 subfamily. Homotetramer.

It localises to the cytoplasm. It carries out the reaction L-citrulline + L-aspartate + ATP = 2-(N(omega)-L-arginino)succinate + AMP + diphosphate + H(+). The protein operates within amino-acid biosynthesis; L-arginine biosynthesis; L-arginine from L-ornithine and carbamoyl phosphate: step 2/3. This Roseiflexus castenholzii (strain DSM 13941 / HLO8) protein is Argininosuccinate synthase.